The primary structure comprises 117 residues: MSWRGRSTYYWPRPRRYVQPPEMIGPMRPEQFSDEVEPATPEEGEPATQRQDPAAAQEGEDEGASAGQGPKPEADSQEQGHPQTGCECEDGPDGQEMDPPNPEEVKTPEEGEGQSQC.

The segment at 1–117 is disordered; sequence MSWRGRSTYY…PEEGEGQSQC (117 aa). Composition is skewed to acidic residues over residues 32 to 45 and 87 to 96; these read FSDE…EEGE and ECEDGPDGQE.

The protein belongs to the GAGE family. As to expression, expressed in a variety of tumor tissues but not in normal tissues, except testis.

Its function is as follows. Antigen, recognized on melanoma by autologous cytolytic T-lymphocytes. In Homo sapiens (Human), this protein is G antigen 1.